The chain runs to 368 residues: (Iso)eugenol O-methyltransferase (368 aa).

A propeptide spanning residues 1 to 2 (MG) is cleaved from the precursor. Residues Ser187, 211–212 (GG), Asp234, 254–255 (DM), and Lys268 contribute to the S-adenosyl-L-methionine site. The Proton acceptor role is filled by His272.

This sequence belongs to the class I-like SAM-binding methyltransferase superfamily. Cation-independent O-methyltransferase family. COMT subfamily. Homodimer. In terms of tissue distribution, expressed in petals, style and stamens, but not in stigma, sepals, leaves or stem tissues.

It carries out the reaction (E)-isoeugenol + S-adenosyl-L-methionine = (E)-isomethyleugenol + S-adenosyl-L-homocysteine + H(+). Functionally, catalyzes the methylation of the para-4-hydroxyl of both eugenol and (iso)eugenol to methyleugenol and isomethyleugenol, respectively. The resulting products are part of a complex mixture of low-molecular-weight volatile compounds emitted by the flowers to attract pollinators. This chain is (Iso)eugenol O-methyltransferase (IEMT1), found in Clarkia breweri (Fairy fans).